The primary structure comprises 360 residues: Membrane-bound lytic murein transglycosylase C (360 aa).

The signal sequence occupies residues 1–16 (MKKLLALAVIAPLLIS). A lipid anchor (N-palmitoyl cysteine) is attached at cysteine 17. Cysteine 17 carries S-diacylglycerol cysteine lipidation.

This sequence belongs to the transglycosylase Slt family.

The protein localises to the cell outer membrane. The catalysed reaction is Exolytic cleavage of the (1-&gt;4)-beta-glycosidic linkage between N-acetylmuramic acid (MurNAc) and N-acetylglucosamine (GlcNAc) residues in peptidoglycan, from either the reducing or the non-reducing ends of the peptidoglycan chains, with concomitant formation of a 1,6-anhydrobond in the MurNAc residue.. Murein-degrading enzyme. May play a role in recycling of muropeptides during cell elongation and/or cell division. The protein is Membrane-bound lytic murein transglycosylase C of Salmonella arizonae (strain ATCC BAA-731 / CDC346-86 / RSK2980).